The following is a 932-amino-acid chain: Isoleucine--tRNA ligase (932 aa).

Positions P57 to H67 match the 'HIGH' region motif. L-isoleucyl-5'-AMP is bound at residue E556. The 'KMSKS' region motif lies at K597–S601. K600 contributes to the ATP binding site. Zn(2+) is bound by residues C891, C894, C911, and C914.

It belongs to the class-I aminoacyl-tRNA synthetase family. IleS type 1 subfamily. As to quaternary structure, monomer. Requires Zn(2+) as cofactor.

The protein resides in the cytoplasm. It catalyses the reaction tRNA(Ile) + L-isoleucine + ATP = L-isoleucyl-tRNA(Ile) + AMP + diphosphate. Its function is as follows. Catalyzes the attachment of isoleucine to tRNA(Ile). As IleRS can inadvertently accommodate and process structurally similar amino acids such as valine, to avoid such errors it has two additional distinct tRNA(Ile)-dependent editing activities. One activity is designated as 'pretransfer' editing and involves the hydrolysis of activated Val-AMP. The other activity is designated 'posttransfer' editing and involves deacylation of mischarged Val-tRNA(Ile). This chain is Isoleucine--tRNA ligase, found in Lactiplantibacillus plantarum (strain ATCC BAA-793 / NCIMB 8826 / WCFS1) (Lactobacillus plantarum).